The chain runs to 31 residues: Photosystem II reaction center protein T (31 aa).

The helical transmembrane segment at 3–23 (SFAYILILGLAIATLFFAIAF) threads the bilayer.

Belongs to the PsbT family. PSII is composed of 1 copy each of membrane proteins PsbA, PsbB, PsbC, PsbD, PsbE, PsbF, PsbH, PsbI, PsbJ, PsbK, PsbL, PsbM, PsbT, PsbX, PsbY, PsbZ, Psb30/Ycf12, peripheral proteins PsbO, CyanoQ (PsbQ), PsbU, PsbV and a large number of cofactors. It forms dimeric complexes.

It is found in the cellular thylakoid membrane. In terms of biological role, found at the monomer-monomer interface of the photosystem II (PS II) dimer, plays a role in assembly and dimerization of PSII. PSII is a light-driven water plastoquinone oxidoreductase, using light energy to abstract electrons from H(2)O, generating a proton gradient subsequently used for ATP formation. The chain is Photosystem II reaction center protein T from Synechococcus sp. (strain CC9311).